Here is a 373-residue protein sequence, read N- to C-terminus: Dual-specificity RNA methyltransferase RlmN (373 aa).

Glu94 serves as the catalytic Proton acceptor. The Radical SAM core domain occupies 100–339; that stretch reads EEDRATLCVS…VIVRKTRGDD (240 aa). Cysteines 107 and 344 form a disulfide. [4Fe-4S] cluster contacts are provided by Cys114, Cys118, and Cys121. S-adenosyl-L-methionine-binding positions include 168 to 169, Ser200, 222 to 224, and Asn301; these read GE and SIH. The active-site S-methylcysteine intermediate is the Cys344.

It belongs to the radical SAM superfamily. RlmN family. [4Fe-4S] cluster is required as a cofactor.

The protein resides in the cytoplasm. The enzyme catalyses adenosine(2503) in 23S rRNA + 2 reduced [2Fe-2S]-[ferredoxin] + 2 S-adenosyl-L-methionine = 2-methyladenosine(2503) in 23S rRNA + 5'-deoxyadenosine + L-methionine + 2 oxidized [2Fe-2S]-[ferredoxin] + S-adenosyl-L-homocysteine. It carries out the reaction adenosine(37) in tRNA + 2 reduced [2Fe-2S]-[ferredoxin] + 2 S-adenosyl-L-methionine = 2-methyladenosine(37) in tRNA + 5'-deoxyadenosine + L-methionine + 2 oxidized [2Fe-2S]-[ferredoxin] + S-adenosyl-L-homocysteine. Its function is as follows. Specifically methylates position 2 of adenine 2503 in 23S rRNA and position 2 of adenine 37 in tRNAs. m2A2503 modification seems to play a crucial role in the proofreading step occurring at the peptidyl transferase center and thus would serve to optimize ribosomal fidelity. The protein is Dual-specificity RNA methyltransferase RlmN of Shewanella sediminis (strain HAW-EB3).